The following is a 34-amino-acid chain: Aspartate aminotransferase 2 (34 aa).

It belongs to the class-I pyridoxal-phosphate-dependent aminotransferase family. Homodimer. Requires pyridoxal 5'-phosphate as cofactor.

It catalyses the reaction L-aspartate + 2-oxoglutarate = oxaloacetate + L-glutamate. Important for the metabolism of amino acids and Krebs-cycle related organic acids. In plants, it is involved in nitrogen metabolism and in aspects of carbon and energy metabolism. The protein is Aspartate aminotransferase 2 of Pseudotsuga menziesii (Douglas-fir).